The sequence spans 472 residues: Glutamate synthase [NADPH] small chain (472 aa).

The 4Fe-4S ferredoxin-type domain occupies Q41–L72. The [4Fe-4S] cluster site is built by C50, C53, C58, and C62.

The cofactor is [4Fe-4S] cluster.

It carries out the reaction 2 L-glutamate + NADP(+) = L-glutamine + 2-oxoglutarate + NADPH + H(+). The protein operates within amino-acid biosynthesis; L-glutamate biosynthesis via GLT pathway; L-glutamate from 2-oxoglutarate and L-glutamine (NADP(+) route): step 1/1. It participates in energy metabolism; nitrogen metabolism. In terms of biological role, catalyzes the conversion of L-glutamine and 2-oxoglutarate into two molecules of L-glutamate. The sequence is that of Glutamate synthase [NADPH] small chain from Halomonas elongata (strain ATCC 33173 / DSM 2581 / NBRC 15536 / NCIMB 2198 / 1H9).